A 546-amino-acid polypeptide reads, in one-letter code: Peroxisomal OPC-8:0-CoA ligase 1 (546 aa).

Positions 197, 198, 199, 200, 201, and 205 each coordinate ATP. K265 is a binding site for CoA. Residues 267–338 (EMHEMMSAIG…EKYPTVKILQ (72 aa)) form an SBD1 region. Residues Q338, G339, T343, D424, and R439 each coordinate ATP. The SBD2 stretch occupies residues 339–403 (GYGLTESTGI…LKGPSIMKGY (65 aa)). Positions 447 and 448 each coordinate CoA. Residue K530 coordinates ATP. The Microbody targeting signal motif lies at 544–546 (SKL).

This sequence belongs to the ATP-dependent AMP-binding enzyme family. Mg(2+) is required as a cofactor. As to expression, expressed at low levels in seedlings, cotyledons, leaves, hypocotyls and roots.

It localises to the peroxisome. It carries out the reaction (9S,13S,15Z)-12-oxophyto-10,15-dienoate + ATP + CoA = (10Z,15Z)-12-oxophytodienoyl-CoA + AMP + diphosphate. It catalyses the reaction (1S,2S)-OPC-8 + ATP + CoA = OPC8-CoA + AMP + diphosphate. The catalysed reaction is hexadecanoate + ATP + CoA = hexadecanoyl-CoA + AMP + diphosphate. The enzyme catalyses (9Z)-octadecenoate + ATP + CoA = (9Z)-octadecenoyl-CoA + AMP + diphosphate. It carries out the reaction tetradecanoate + ATP + CoA = tetradecanoyl-CoA + AMP + diphosphate. It catalyses the reaction decanoate + ATP + CoA = decanoyl-CoA + AMP + diphosphate. The catalysed reaction is dodecanoate + ATP + CoA = dodecanoyl-CoA + AMP + diphosphate. The enzyme catalyses octadecanoate + ATP + CoA = octadecanoyl-CoA + AMP + diphosphate. It carries out the reaction OPC-6 + ATP + CoA = OPC-6-CoA + AMP + diphosphate. It catalyses the reaction dinor-OPDA + ATP + CoA = dinor-OPDA-CoA + AMP + diphosphate. Functionally, contributes to jasmonic acid biosynthesis by initiating the beta-oxidative chain shortening of its precursors. Converts 12-oxo-phytodienoic acid (OPDA) and 3-oxo-2-(2'-pentenyl)-cyclopentane-1-octanoic acid (OPC-8:0) into OPDA-CoA and OPC-8:0-CoA, respectively. Follows a two-step reaction mechanism, wherein the carboxylate substrate first undergoes adenylation by ATP, followed by a thioesterification in the presence of CoA to yield the final CoA thioester. The chain is Peroxisomal OPC-8:0-CoA ligase 1 from Arabidopsis thaliana (Mouse-ear cress).